A 334-amino-acid chain; its full sequence is MDSAVALSVLGAGSYGTALAISLARQGQPVLLWGHDPQQVARLQQDRCNQEFLPDVPFPDSLQMTDDLAYAVSASRDLLVVVPSHVFGEVLLRIKPFMRPDTRVAWATKGLEPEHGRLLGDVAKEILGEQIPLAVLSGPTFARELAAGMPTAIAIAGTDEQFTSDMSALMHCGKSLRVYTNPDFIGLQIGGAVKNVIAIGAGLSDGLGFGANARTALITRGLVELQRLGLSLGADAKTFMGMAGLGDLVLTCTDNQSRNRRFGLALGQGKTVEQAMTEIGQVVEGYRNTKEVHVLAARQNVEMPICEQIYQILYQGKSAQDAALALLGRDQKGE.

S14, Y15, H35, and K109 together coordinate NADPH. K109, G138, and T140 together coordinate sn-glycerol 3-phosphate. A142 serves as a coordination point for NADPH. Residues K194, D247, S257, R258, and N259 each contribute to the sn-glycerol 3-phosphate site. The active-site Proton acceptor is the K194. Residue R258 coordinates NADPH. V282 and E284 together coordinate NADPH.

Belongs to the NAD-dependent glycerol-3-phosphate dehydrogenase family.

Its subcellular location is the cytoplasm. The enzyme catalyses sn-glycerol 3-phosphate + NAD(+) = dihydroxyacetone phosphate + NADH + H(+). It catalyses the reaction sn-glycerol 3-phosphate + NADP(+) = dihydroxyacetone phosphate + NADPH + H(+). It participates in membrane lipid metabolism; glycerophospholipid metabolism. Functionally, catalyzes the reduction of the glycolytic intermediate dihydroxyacetone phosphate (DHAP) to sn-glycerol 3-phosphate (G3P), the key precursor for phospholipid synthesis. This is Glycerol-3-phosphate dehydrogenase [NAD(P)+] from Tolumonas auensis (strain DSM 9187 / NBRC 110442 / TA 4).